A 466-amino-acid chain; its full sequence is RuvB-like helicase 2 (466 aa).

74 to 81 is a binding site for ATP; it reads GPPSTGKT.

This sequence belongs to the RuvB family. As to quaternary structure, may form heterododecamers with RVB1. Component of the SWR1 chromatin remodeling complex, the INO80 chromatin remodeling complex, and of the R2TP complex.

The protein resides in the nucleus. The enzyme catalyses ATP + H2O = ADP + phosphate + H(+). Its function is as follows. DNA helicase which participates in several chromatin remodeling complexes, including the SWR1 and the INO80 complexes. The SWR1 complex mediates the ATP-dependent exchange of histone H2A for the H2A variant HZT1 leading to transcriptional regulation of selected genes by chromatin remodeling. The INO80 complex remodels chromatin by shifting nucleosomes and is involved in DNA repair. Also involved in pre-rRNA processing. This is RuvB-like helicase 2 (RVB2) from Yarrowia lipolytica (strain CLIB 122 / E 150) (Yeast).